The following is an 87-amino-acid chain: MVNMKASMFLTFAGLVLLFVVCYASESEEKEFPKEMLSSIFAVDNDFKQEERDCAGYMRECKEKLCCSGYVCSSRWKWCVLPAPWRR.

The signal sequence occupies residues 1-24 (MVNMKASMFLTFAGLVLLFVVCYA). The propeptide occupies 25 to 52 (SESEEKEFPKEMLSSIFAVDNDFKQEER). Disulfide bonds link C54-C67, C61-C72, and C66-C79.

It belongs to the neurotoxin 10 (Hwtx-1) family. 51 (Hntx-8) subfamily. Hntx-8 sub-subfamily. Expressed by the venom gland.

The protein localises to the secreted. Its function is as follows. Probable sodium channel pore blocker that dose-dependently inhibits voltage-gated sodium channels (VGSC) on DUM neurons in a way similar to tetrodotoxin. Has no effect on the kinetics of activation and inactivation. Seems not to interact with VGSC in an inactivated state. In vivo, reversibly paralyzes cockroaches, and can enhance the muscular contraction elicited by stimulating its nerve. This Cyriopagopus schmidti (Chinese bird spider) protein is Mu-theraphotoxin-Hs1a.